We begin with the raw amino-acid sequence, 292 residues long: MKKHSNNLDLFDQTEECLESNLRSCKIIVGDAREAVQGLDSEIFDCVVTSPPYWGLRDYGNGGQIGAEDNINDYIKDLVDLFRDVRRTLKDDGTLWLNIGDSYTSGGRTWRDKDDKNKGRAMSYRPPTPEGLKPKDLIGVPWRLAFALQNDGWYLRTDIIWNKPNCQPESVRDRPTRSHEYIFLLSKGKKYYYDWESIKEPASDPKMDKKNRRTVWNINTEPYPGSHFAVFPRAMARLCVLAGSRPGGKVLDPFFGSGTTGVVCQELDRECVGIELNEEYASLAKERILRRR.

A disordered region spans residues 110-130; the sequence is WRDKDDKNKGRAMSYRPPTPE.

Belongs to the N(4)/N(6)-methyltransferase family. N(4) subfamily.

The catalysed reaction is a 2'-deoxycytidine in DNA + S-adenosyl-L-methionine = an N(4)-methyl-2'-deoxycytidine in DNA + S-adenosyl-L-homocysteine + H(+). In terms of biological role, a beta subtype methylase thatnrecognizes the double-stranded sequence 5'-CCCGGG-3', methylates C-2 on both strands, and protects the DNA from cleavage by the SmaI endonuclease. This Serratia marcescens protein is Type II methyltransferase M.SmaI (smaIM).